Here is a 1386-residue protein sequence, read N- to C-terminus: Adhesin AWP3b (1386 aa).

An N-terminal signal peptide occupies residues 1-19; sequence MISFVTLLAILGLLSISWA. 3 disulfides stabilise this stretch: C115-C145, C144-C178, and C304-C341. A glycan (N-linked (GlcNAc...) asparagine) is linked at N117. 4 N-linked (GlcNAc...) asparagine glycosylation sites follow: N315, N345, N468, and N526. The interval 429–507 is disordered; that stretch reads TTDSPGHTIT…SSPTSDFSSV (79 aa). Disordered stretches follow at residues 530–553 and 612–690; these read IVDSSSSSASSLPSSMSSSLSSSM and TTDS…FSSV. N-linked (GlcNAc...) asparagine glycans are attached at residues N651 and N709. Disordered regions lie at residues 714–739 and 795–873; these read VDSSSSSASSLPSSMPSSLPSSMSSS and TTDS…FSSV. 5 N-linked (GlcNAc...) asparagine glycosylation sites follow: N834, N898, N1008, N1017, and N1096. Residues 1000 to 1032 are disordered; the sequence is TIQESELSNTSRTTMTSNSSVSISSTSSRSSFS. 2 stretches are compositionally biased toward polar residues: residues 1140 to 1150 and 1159 to 1177; these read SHPVATNSGDK and QVSTTMTSSGPTPDTSSFD. Residues 1140–1186 form a disordered region; sequence SHPVATNSGDKPTTPKRSEQVSTTMTSSGPTPDTSSFDTDGMSAYSR. N-linked (GlcNAc...) asparagine glycosylation is present at N1197. Polar residues predominate over residues 1198–1218; that stretch reads KSSTSQLGNNKQTFSNLQLES. The interval 1198-1227 is disordered; the sequence is KSSTSQLGNNKQTFSNLQLESTRPHSENEV. An N-linked (GlcNAc...) asparagine glycan is attached at N1229. A compositionally biased stretch (polar residues) spans 1241–1259; it reads STYGTNNVNPLSPTGSISI. The disordered stretch occupies residues 1241–1269; sequence STYGTNNVNPLSPTGSISIPLTEDGQGDN. N-linked (GlcNAc...) asparagine glycosylation occurs at N1287.

The protein localises to the secreted. It is found in the cell wall. Its function is as follows. May play a role in cell adhesion. The chain is Adhesin AWP3b from Candida glabrata (strain ATCC 2001 / BCRC 20586 / JCM 3761 / NBRC 0622 / NRRL Y-65 / CBS 138) (Yeast).